The sequence spans 304 residues: ATP synthase gamma chain (304 aa).

It belongs to the ATPase gamma chain family. In terms of assembly, F-type ATPases have 2 components, CF(1) - the catalytic core - and CF(0) - the membrane proton channel. CF(1) has five subunits: alpha(3), beta(3), gamma(1), delta(1), epsilon(1). CF(0) has three main subunits: a, b and c.

It localises to the cell membrane. Functionally, produces ATP from ADP in the presence of a proton gradient across the membrane. The gamma chain is believed to be important in regulating ATPase activity and the flow of protons through the CF(0) complex. In Thermobifida fusca (strain YX), this protein is ATP synthase gamma chain.